A 136-amino-acid polypeptide reads, in one-letter code: Peptide methionine sulfoxide reductase MsrB (136 aa).

In terms of domain architecture, MsrB spans 13–135 (ENDWRSKLTP…NSASLDFKDK (123 aa)). Residues Cys52, Cys55, Cys101, and Cys104 each coordinate Zn(2+). The active-site Nucleophile is the Cys124.

It belongs to the MsrB Met sulfoxide reductase family. Requires Zn(2+) as cofactor.

It carries out the reaction L-methionyl-[protein] + [thioredoxin]-disulfide + H2O = L-methionyl-(R)-S-oxide-[protein] + [thioredoxin]-dithiol. This Synechococcus sp. (strain RCC307) protein is Peptide methionine sulfoxide reductase MsrB.